The chain runs to 176 residues: Isopentenyl-diphosphate Delta-isomerase 1 (176 aa).

2 residues coordinate Mn(2+): His23 and His30. The Nudix hydrolase domain maps to 28–162; it reads HLHRAFSCFI…EEFCTPWFKK (135 aa). The active site involves Cys65. Mg(2+) is bound at residue Cys65. His67 lines the Mn(2+) pocket. Glu85 contributes to the Mg(2+) binding site. Mn(2+)-binding residues include Glu112 and Glu114. Residue Glu114 is part of the active site.

The protein belongs to the IPP isomerase type 1 family. As to quaternary structure, homodimer. The cofactor is Mg(2+). Requires Mn(2+) as cofactor.

It localises to the cytoplasm. It catalyses the reaction isopentenyl diphosphate = dimethylallyl diphosphate. It participates in isoprenoid biosynthesis; dimethylallyl diphosphate biosynthesis; dimethylallyl diphosphate from isopentenyl diphosphate: step 1/1. In terms of biological role, catalyzes the 1,3-allylic rearrangement of the homoallylic substrate isopentenyl (IPP) to its highly electrophilic allylic isomer, dimethylallyl diphosphate (DMAPP). This is Isopentenyl-diphosphate Delta-isomerase 1 from Photorhabdus laumondii subsp. laumondii (strain DSM 15139 / CIP 105565 / TT01) (Photorhabdus luminescens subsp. laumondii).